A 130-amino-acid chain; its full sequence is S-protein homolog 32 (130 aa).

An N-terminal signal peptide occupies residues 1-21 (MKYFTIFVFVFSLCMLGHVSG).

It belongs to the plant self-incompatibility (S1) protein family.

The protein localises to the secreted. This is S-protein homolog 32 from Arabidopsis thaliana (Mouse-ear cress).